Consider the following 294-residue polypeptide: Shikimate dehydrogenase (NADP(+)) (294 aa).

Shikimate is bound by residues Ser14–Ser16 and Thr61. Catalysis depends on Lys65, which acts as the Proton acceptor. Position 77 (Asp77) interacts with NADP(+). Asn86 and Asp102 together coordinate shikimate. NADP(+)-binding positions include Gly140–Ala144 and Leu235. Tyr237 serves as a coordination point for shikimate. An NADP(+)-binding site is contributed by Gly259.

This sequence belongs to the shikimate dehydrogenase family. Homodimer.

The enzyme catalyses shikimate + NADP(+) = 3-dehydroshikimate + NADPH + H(+). Its pathway is metabolic intermediate biosynthesis; chorismate biosynthesis; chorismate from D-erythrose 4-phosphate and phosphoenolpyruvate: step 4/7. In terms of biological role, involved in the biosynthesis of the chorismate, which leads to the biosynthesis of aromatic amino acids. Catalyzes the reversible NADPH linked reduction of 3-dehydroshikimate (DHSA) to yield shikimate (SA). This chain is Shikimate dehydrogenase (NADP(+)), found in Blochmanniella floridana.